A 438-amino-acid polypeptide reads, in one-letter code: Gamma-glutamyl phosphate reductase (438 aa).

Positions 1–21 are disordered; that stretch reads MTAQTSSDVTDQKTDLTRESE. Residues 10-21 show a composition bias toward basic and acidic residues; it reads TDQKTDLTRESE.

The protein belongs to the gamma-glutamyl phosphate reductase family.

Its subcellular location is the cytoplasm. The enzyme catalyses L-glutamate 5-semialdehyde + phosphate + NADP(+) = L-glutamyl 5-phosphate + NADPH + H(+). It functions in the pathway amino-acid biosynthesis; L-proline biosynthesis; L-glutamate 5-semialdehyde from L-glutamate: step 2/2. In terms of biological role, catalyzes the NADPH-dependent reduction of L-glutamate 5-phosphate into L-glutamate 5-semialdehyde and phosphate. The product spontaneously undergoes cyclization to form 1-pyrroline-5-carboxylate. In Corynebacterium efficiens (strain DSM 44549 / YS-314 / AJ 12310 / JCM 11189 / NBRC 100395), this protein is Gamma-glutamyl phosphate reductase.